We begin with the raw amino-acid sequence, 300 residues long: Pantoate--beta-alanine ligase (300 aa).

43 to 50 contacts ATP; that stretch reads MGYLHSGH. H50 functions as the Proton donor in the catalytic mechanism. Q74 serves as a coordination point for (R)-pantoate. Q74 is a beta-alanine binding site. 162–165 contacts ATP; it reads GQKD. Q168 lines the (R)-pantoate pocket. ATP is bound by residues I191 and 199-202; that span reads KSSR.

Belongs to the pantothenate synthetase family. Homodimer.

The protein resides in the cytoplasm. The enzyme catalyses (R)-pantoate + beta-alanine + ATP = (R)-pantothenate + AMP + diphosphate + H(+). It participates in cofactor biosynthesis; (R)-pantothenate biosynthesis; (R)-pantothenate from (R)-pantoate and beta-alanine: step 1/1. Catalyzes the condensation of pantoate with beta-alanine in an ATP-dependent reaction via a pantoyl-adenylate intermediate. The protein is Pantoate--beta-alanine ligase (panC) of Dictyostelium discoideum (Social amoeba).